A 275-amino-acid chain; its full sequence is Endolytic peptidoglycan transglycosylase RlpA (275 aa).

A signal peptide spans 1-22; that stretch reads MQIKTITLKLSAVSLGALFFSG. Cys23 is lipidated: N-palmitoyl cysteine. Cys23 is lipidated: S-diacylglycerol cysteine. One can recognise an SPOR domain in the interval 200-275; that stretch reads IYEGGNFMVQ…AFAGAFVVRE (76 aa).

It belongs to the RlpA family.

Its subcellular location is the cell membrane. Lytic transglycosylase with a strong preference for naked glycan strands that lack stem peptides. This is Endolytic peptidoglycan transglycosylase RlpA from Campylobacter jejuni subsp. jejuni serotype O:2 (strain ATCC 700819 / NCTC 11168).